Reading from the N-terminus, the 405-residue chain is Imidazolonepropionase (405 aa).

The Fe(3+) site is built by His-73 and His-75. Positions 73 and 75 each coordinate Zn(2+). Residues Arg-82, Tyr-145, and His-178 each contribute to the 4-imidazolone-5-propanoate site. Tyr-145 contributes to the N-formimidoyl-L-glutamate binding site. His-243 contributes to the Fe(3+) binding site. His-243 serves as a coordination point for Zn(2+). Gln-246 contributes to the 4-imidazolone-5-propanoate binding site. Asp-318 contacts Fe(3+). Asp-318 is a Zn(2+) binding site. Residues Asn-320 and Gly-322 each coordinate N-formimidoyl-L-glutamate. Thr-323 contacts 4-imidazolone-5-propanoate.

Belongs to the metallo-dependent hydrolases superfamily. HutI family. The cofactor is Zn(2+). Requires Fe(3+) as cofactor.

It is found in the cytoplasm. The catalysed reaction is 4-imidazolone-5-propanoate + H2O = N-formimidoyl-L-glutamate. The protein operates within amino-acid degradation; L-histidine degradation into L-glutamate; N-formimidoyl-L-glutamate from L-histidine: step 3/3. Functionally, catalyzes the hydrolytic cleavage of the carbon-nitrogen bond in imidazolone-5-propanoate to yield N-formimidoyl-L-glutamate. It is the third step in the universal histidine degradation pathway. The protein is Imidazolonepropionase of Brucella suis (strain ATCC 23445 / NCTC 10510).